The primary structure comprises 334 residues: Large ribosomal subunit protein uL3 (334 aa).

The segment covering 1 to 10 has biased composition (basic residues); it reads MGMKKSRPRR. The disordered stretch occupies residues 1 to 20; sequence MGMKKSRPRRGSLAFSPRKR.

Belongs to the universal ribosomal protein uL3 family. As to quaternary structure, part of the 50S ribosomal subunit. Forms a cluster with proteins L14 and L24e.

Its function is as follows. One of the primary rRNA binding proteins, it binds directly near the 3'-end of the 23S rRNA, where it nucleates assembly of the 50S subunit. This chain is Large ribosomal subunit protein uL3, found in Methanococcus maripaludis (strain C6 / ATCC BAA-1332).